An 860-amino-acid polypeptide reads, in one-letter code: Mycobactin import ATP-binding/permease protein IrtA (860 aa).

At 1 to 293 (MARGIQGVMM…GRLLAPLKTT (293 aa)) the chain is on the cytoplasmic side. The 110-residue stretch at 15-124 (ARDHQATVVS…LGSAGFSVPE (110 aa)) folds into the FAD-binding FR-type domain. FAD is bound by residues 70 to 73 (RAYT), 87 to 91 (DVVLH), 97 to 98 (AS), and 238 to 240 (TEG). A disordered region spans residues 242-275 (AMGTKRGDDDKTPEVNPAPRADKPEAPAPAAAGR). The helical transmembrane segment at 294–314 (LIISGVLQAIITLVQLAPFVL) threads the bilayer. Residues 295-577 (IISGVLQAII…IAYGLGGIRG (283 aa)) enclose the ABC transmembrane type-1 domain. Topologically, residues 315 to 335 (LVELARLLLSGASSDRLWTLG) are periplasmic. The chain crosses the membrane as a helical span at residues 336 to 356 (VVAISLLGTGSFLAAALTLWL). Residues 357 to 409 (HLVDARFARDLRTGLLTKMSRLPLGWFTARGSGSIKQLVQDDTLSLHYLITHA) are Cytoplasmic-facing. The helical transmembrane segment at 410-430 (IPDAVAAVIAPVAVLVYLFVV) threads the bilayer. The Periplasmic segment spans residues 431–433 (DWR). A helical transmembrane segment spans residues 434–454 (LALVMFVPVLIYLVLMTVMTI). At 455–525 (QSGPKIAQSQ…KKSMMDLVTR (71 aa)) the chain is on the cytoplasmic side. A helical transmembrane segment spans residues 526-546 (PGTFLWLIVAVGTPMITSGAM). At 547–550 (DPVD) the chain is on the periplasmic side. Residues 551-571 (ILPFLLLGTTFGVRLLGIAYG) form a helical membrane-spanning segment. The Cytoplasmic portion of the chain corresponds to 572–860 (LGGIRGGMLA…AAGPTGEAVR (289 aa)). Positions 609–842 (VVFDNVTFGY…AGRYRQLWET (234 aa)) constitute an ABC transporter domain. An ATP-binding site is contributed by 642–649 (GPSGSGKS).

This sequence belongs to the ABC transporter superfamily. Siderophore-Fe(3+) uptake transporter (SIUT) (TC 3.A.1.21) family. As to quaternary structure, forms a heterodimer with IrtB. FAD is required as a cofactor.

The protein localises to the cell inner membrane. In terms of biological role, part of the ABC transporter complex IrtAB involved in the import of iron-bound mycobactin (Fe-MBT) and carboxymycobactin (Fe-cMBT). Has a preference for Fe-MBT over Fe-cMBT. Mycobactins are then reduced by the siderophore interaction domain to facilitate iron release in the bacterial cell. Transmembrane domains (TMD) form a pore in the membrane and the ATP-binding domain (NBD) is responsible for energy generation. This is Mycobactin import ATP-binding/permease protein IrtA from Mycolicibacterium smegmatis (strain ATCC 700084 / mc(2)155) (Mycobacterium smegmatis).